Consider the following 100-residue polypeptide: MISLFHGLFLSLILFILGLTSLIVRRNILFMLISLEIMMNAAALALVVSGSYWKQSDGQIMYILAITLAASEASIALALLLQLYRRQRTLNINALSEMSG.

3 helical membrane passes run 4–24 (LFHGLFLSLILFILGLTSLIV), 28–48 (ILFMLISLEIMMNAAALALVV), and 60–80 (IMYILAITLAASEASIALALL).

This sequence belongs to the complex I subunit 4L family. NDH-1 is composed of 13 different subunits. Subunits NuoA, H, J, K, L, M, N constitute the membrane sector of the complex.

The protein localises to the cell membrane. The enzyme catalyses a quinone + NADH + 5 H(+)(in) = a quinol + NAD(+) + 4 H(+)(out). NDH-1 shuttles electrons from NADH, via FMN and iron-sulfur (Fe-S) centers, to quinones in the respiratory chain. The immediate electron acceptor for the enzyme in this species is believed to be ubiquinone. Couples the redox reaction to proton translocation (for every two electrons transferred, four hydrogen ions are translocated across the cytoplasmic membrane), and thus conserves the redox energy in a proton gradient. The polypeptide is NADH-quinone oxidoreductase subunit K (Buchnera aphidicola subsp. Schizaphis graminum (strain Sg)).